The following is a 597-amino-acid chain: Nuclear receptor subfamily 4 group A member 1 (597 aa).

The tract at residues 1 to 22 is disordered; the sequence is MPCIQAQYGTPATSPGPRDHLT. The interval 170–465 is required for nuclear import; sequence RVWTEQLPKA…PGEGKLIFCS (296 aa). Positions 263–338 form a DNA-binding region, nuclear receptor; it reads EGRCAVCGDN…VGMVKEVVRT (76 aa). NR C4-type zinc fingers lie at residues 266–286 and 302–326; these read CAVC…CEGC and CLAN…FQKC. A required for binding NBRE-containing DNA region spans residues 267–353; it reads AVCGDNASCQ…RRGRLPSKPK (87 aa). Residues 298–360 are required for the interaction with RXRA; sequence AKYICLANKD…KPKQPPDASP (63 aa). Serine 340 is subject to Phosphoserine; by PKA. Residues 341 to 360 are disordered; it reads LKGRRGRLPSKPKQPPDASP. Serine 350 bears the Phosphoserine; by PKA, RPS6KA1 and RPS6KA3 mark. In terms of domain architecture, NR LBD spans 359-594; sequence SPTNLLTSLI…PIVDKIFMDT (236 aa). Residues 520–543 are binds lipopolysaccharide; that stretch reads PRRVEELQNRIASCLKEHMAAVAG. An AF-2 region spans residues 583–594; sequence PPPIVDKIFMDT.

This sequence belongs to the nuclear hormone receptor family. NR4 subfamily. In terms of assembly, binds the NGFI-B response element (NBRE) as a monomer. Binds the Nur response element (NurRE), consisting of two inverse NBRE-related octanucleotide repeats separated by 6 base-pairs, as a dimer. Interacts (via N-terminus) with NLRP3 (via LRR repeat domain); the interaction is direct, requires binding of NR4A1/Nur77 to NBRE-containing dsDNA and lipopolysaccharide, and leads to non-canonical NLRP3 inflammasome activation. Interacts with GADD45GIP1. Interacts with STK11. Interacts with IFI27. Heterodimer (via DNA-binding domain) with RXRA (via C-terminus); DNA-binding of the heterodimer is enhanced by 9-cis retinoic acid. Competes for the RXRA interaction with EP300 and thereby attenuates EP300 mediated acetylation of RXRA. Interacts with NCOA1. Interacts with NCOA2. Interacts with NCOA3. Requires Zn(2+) as cofactor. Post-translationally, phosphorylated at Ser-350 by RPS6KA1 and RPS6KA3 in response to mitogenic or stress stimuli. Phosphorylation of Ser-350 results in decrease in NBRE binding while phosphorylation of Ser-340 has little effect on it. In terms of processing, acetylated by p300/CBP, acetylation increases stability. Deacetylated by HDAC1. In terms of tissue distribution, expressed in lung, brain and superior cervical ganglia. High levels are seen in the adrenal tissue.

The protein resides in the nucleus. It is found in the cytoplasm. Its subcellular location is the cytosol. The protein localises to the mitochondrion. In terms of biological role, orphan nuclear receptor. Binds the NGFI-B response element (NBRE) 5'-AAAGGTCA-3'. Binds 9-cis-retinoic acid outside of its ligand-binding (NR LBD) domain. Participates in energy homeostasis by sequestrating the kinase STK11 in the nucleus, thereby attenuating cytoplasmic AMPK activation. Regulates the inflammatory response in macrophages by regulating metabolic adaptations during inflammation, including repressing the transcription of genes involved in the citric acid cycle (TCA). Inhibits NF-kappa-B signaling by binding to low-affinity NF-kappa-B binding sites, such as at the IL2 promoter. May act concomitantly with NR4A2 in regulating the expression of delayed-early genes during liver regeneration. Plays a role in the vascular response to injury. Its function is as follows. In the cytosol, upon its detection of both bacterial lipopolysaccharide (LPS) and NBRE-containing mitochondrial DNA released by GSDMD pores during pyroptosis, it promotes non-canonical NLRP3 inflammasome activation by stimulating association of NLRP3 and NEK7. The protein is Nuclear receptor subfamily 4 group A member 1 (Nr4a1) of Rattus norvegicus (Rat).